The chain runs to 315 residues: Acetaldehyde dehydrogenase (315 aa).

Position 13–16 (13–16 (SGNI)) interacts with NAD(+). The active-site Acyl-thioester intermediate is Cys-143. NAD(+)-binding positions include 174–182 (SAGPGTRKN) and Asn-285.

This sequence belongs to the acetaldehyde dehydrogenase family.

It catalyses the reaction acetaldehyde + NAD(+) + CoA = acetyl-CoA + NADH + H(+). This chain is Acetaldehyde dehydrogenase, found in Shewanella woodyi (strain ATCC 51908 / MS32).